Consider the following 239-residue polypeptide: 7-cyano-7-deazaguanine synthase (239 aa).

Residue 13–23 (FSGGQDSTTCL) coordinates ATP. Residues Cys-201, Cys-216, Cys-219, and Cys-222 each contribute to the Zn(2+) site.

Belongs to the QueC family. It depends on Zn(2+) as a cofactor.

The catalysed reaction is 7-carboxy-7-deazaguanine + NH4(+) + ATP = 7-cyano-7-deazaguanine + ADP + phosphate + H2O + H(+). It functions in the pathway purine metabolism; 7-cyano-7-deazaguanine biosynthesis. Functionally, catalyzes the ATP-dependent conversion of 7-carboxy-7-deazaguanine (CDG) to 7-cyano-7-deazaguanine (preQ(0)). This chain is 7-cyano-7-deazaguanine synthase, found in Bradyrhizobium sp. (strain BTAi1 / ATCC BAA-1182).